A 690-amino-acid polypeptide reads, in one-letter code: Proprotein convertase subtilisin/kexin type 9 (690 aa).

An N-terminal signal peptide occupies residues 1–28; sequence MGTVSSRRSWWPLPLLLLLLLGPAGARA. The propeptide occupies 29–150; the sequence is QEDEDGDYEE…IEEDSSVFAQ (122 aa). Sulfotyrosine is present on Tyr36. Ser45 carries the post-translational modification Phosphoserine. The Inhibitor I9 domain maps to 75–147; sequence TYVVVLKEET…VDYIEEDSSV (73 aa). The Peptidase S8 domain maps to 153 to 459; it reads PWNLERITPP…GWQLFCRTVW (307 aa). Active-site charge relay system residues include Asp184 and His224. Cystine bridges form between Cys221-Cys253 and Cys321-Cys356. Residue Ser384 is the Charge relay system of the active site. The tract at residues 448-690 is C-terminal domain; it reads GAGWQLFCRT…HLVQASQELQ (243 aa). Disulfide bonds link Cys455–Cys525, Cys475–Cys524, and Cys484–Cys507. N-linked (GlcNAc...) asparagine glycosylation is present at Asn531. 6 disulfide bridges follow: Cys532/Cys599, Cys550/Cys598, Cys560/Cys586, Cys606/Cys677, Cys624/Cys676, and Cys633/Cys652. Residue Ser686 is modified to Phosphoserine.

It belongs to the peptidase S8 family. In terms of assembly, monomer. Can self-associate to form dimers and higher multimers which may have increased LDLR degrading activity. The precursor protein but not the mature protein may form multimers. Interacts with APOB, VLDLR, LRP8/APOER2 and BACE1. The full-length immature form (pro-PCSK9) interacts with SCNN1A, SCNN1B and SCNN1G. The pro-PCSK9 form (via C-terminal domain) interacts with LDLR. Interacts (via the C-terminal domain) with ANXA2 (via repeat Annexin 1); the interaction inhibits the degradation of LDLR. The cofactor is Ca(2+). Cleavage by furin and PCSK5 generates a truncated inactive protein that is unable to induce LDLR degradation. Post-translationally, undergoes autocatalytic cleavage in the endoplasmic reticulum to release the propeptide from the N-terminus and the cleavage of the propeptide is strictly required for its maturation and activation. The cleaved propeptide however remains associated with the catalytic domain through non-covalent interactions, preventing potential substrates from accessing its active site. As a result, it is secreted from cells as a propeptide-containing, enzymatically inactive protein. In terms of processing, phosphorylation protects the propeptide against proteolysis.

Its subcellular location is the cytoplasm. It is found in the secreted. The protein resides in the endosome. The protein localises to the lysosome. It localises to the cell surface. Its subcellular location is the endoplasmic reticulum. It is found in the golgi apparatus. With respect to regulation, its proteolytic activity is autoinhibited by the non-covalent binding of the propeptide to the catalytic domain. Inhibited by EGTA. Its function is as follows. Crucial player in the regulation of plasma cholesterol homeostasis. Binds to low-density lipid receptor family members: low density lipoprotein receptor (LDLR), very low density lipoprotein receptor (VLDLR), apolipoprotein E receptor (LRP1/APOER) and apolipoprotein receptor 2 (LRP8/APOER2), and promotes their degradation in intracellular acidic compartments. Acts via a non-proteolytic mechanism to enhance the degradation of the hepatic LDLR through a clathrin LDLRAP1/ARH-mediated pathway. May prevent the recycling of LDLR from endosomes to the cell surface or direct it to lysosomes for degradation. Can induce ubiquitination of LDLR leading to its subsequent degradation. Inhibits intracellular degradation of APOB via the autophagosome/lysosome pathway in a LDLR-independent manner. Involved in the disposal of non-acetylated intermediates of BACE1 in the early secretory pathway. Inhibits epithelial Na(+) channel (ENaC)-mediated Na(+) absorption by reducing ENaC surface expression primarily by increasing its proteasomal degradation. Regulates neuronal apoptosis via modulation of LRP8/APOER2 levels and related anti-apoptotic signaling pathways. This is Proprotein convertase subtilisin/kexin type 9 (PCSK9) from Gorilla gorilla gorilla (Western lowland gorilla).